The chain runs to 489 residues: Zeta-carotene desaturase (489 aa).

Belongs to the zeta carotene desaturase family. The cofactor is NAD(+). NADP(+) serves as cofactor. It depends on FAD as a cofactor.

It catalyses the reaction 9,9'-di-cis-zeta-carotene + 2 a quinone = 7,7',9,9'-tetra-cis-lycopene + 2 a quinol. The protein operates within carotenoid biosynthesis; lycopene biosynthesis. In terms of biological role, catalyzes the conversion of zeta-carotene to lycopene via the intermediary of neurosporene. It carries out two consecutive desaturations (introduction of double bonds) at positions C-7 and C-7'. The polypeptide is Zeta-carotene desaturase (crtQ) (Synechocystis sp. (strain ATCC 27184 / PCC 6803 / Kazusa)).